A 199-amino-acid chain; its full sequence is V-type proton ATPase subunit E (199 aa).

The protein belongs to the V-ATPase E subunit family.

Functionally, produces ATP from ADP in the presence of a proton gradient across the membrane. In Clostridium botulinum (strain Loch Maree / Type A3), this protein is V-type proton ATPase subunit E.